The primary structure comprises 308 residues: Methionine synthase (308 aa).

Zn(2+)-binding residues include histidine 192, cysteine 194, glutamate 215, and cysteine 282.

It belongs to the archaeal MetE family. Zn(2+) serves as cofactor.

It participates in amino-acid biosynthesis; L-methionine biosynthesis via de novo pathway. Catalyzes the transfer of a methyl group to L-homocysteine resulting in methionine formation. Can use methylcobalamin and methylcobinamide as methyl donors, but methylcobalamin is not considered to be the physiological substrate. This chain is Methionine synthase, found in Methanocaldococcus jannaschii (strain ATCC 43067 / DSM 2661 / JAL-1 / JCM 10045 / NBRC 100440) (Methanococcus jannaschii).